A 360-amino-acid polypeptide reads, in one-letter code: Abhydrolase domain-containing protein lid-1 (360 aa).

In terms of domain architecture, AB hydrolase-1 spans 73–203 (AIVFIPGLGA…MSFLGGVAGY (131 aa)).

It belongs to the peptidase S33 family. ABHD4/ABHD5 subfamily. Interacts with atgl-1.

It localises to the lipid droplet. In terms of biological role, acts coordinately with atgl-1 within the lipolytic cascade to distribute stored energy to tissues during nutritional deprivation. The polypeptide is Abhydrolase domain-containing protein lid-1 (Caenorhabditis elegans).